A 35-amino-acid polypeptide reads, in one-letter code: Photosystem II reaction center protein M (35 aa).

Residues 5–25 (ILAFIATALFILVPTAFLLII) traverse the membrane as a helical segment.

This sequence belongs to the PsbM family. PSII is composed of 1 copy each of membrane proteins PsbA, PsbB, PsbC, PsbD, PsbE, PsbF, PsbH, PsbI, PsbJ, PsbK, PsbL, PsbM, PsbT, PsbX, PsbY, PsbZ, Psb30/Ycf12, at least 3 peripheral proteins of the oxygen-evolving complex and a large number of cofactors. It forms dimeric complexes.

The protein resides in the plastid. It localises to the chloroplast thylakoid membrane. Its function is as follows. One of the components of the core complex of photosystem II (PSII). PSII is a light-driven water:plastoquinone oxidoreductase that uses light energy to abstract electrons from H(2)O, generating O(2) and a proton gradient subsequently used for ATP formation. It consists of a core antenna complex that captures photons, and an electron transfer chain that converts photonic excitation into a charge separation. This subunit is found at the monomer-monomer interface. This is Photosystem II reaction center protein M from Amborella trichopoda.